Here is a 437-residue protein sequence, read N- to C-terminus: GTPase Der (437 aa).

2 consecutive EngA-type G domains span residues 4-167 (PVVA…AEKD) and 175-352 (IRFS…DHQH). Residues 10 to 17 (GRPNVGKS), 57 to 61 (DTGGI), 119 to 122 (NKVD), 181 to 188 (GRPNVGKS), 229 to 233 (DTAGI), and 294 to 297 (NKWD) each bind GTP. One can recognise a KH-like domain in the interval 353-437 (RRIQSAVLND…PIRLIKRRRK (85 aa)).

It belongs to the TRAFAC class TrmE-Era-EngA-EngB-Septin-like GTPase superfamily. EngA (Der) GTPase family. Associates with the 50S ribosomal subunit.

Functionally, GTPase that plays an essential role in the late steps of ribosome biogenesis. This Limosilactobacillus fermentum (strain NBRC 3956 / LMG 18251) (Lactobacillus fermentum) protein is GTPase Der.